A 459-amino-acid chain; its full sequence is Proton-coupled folate transporter (459 aa).

M1 carries the N-acetylmethionine modification. Residues 1 to 25 (MEGRVSPVGSSHRLLTAAVLFRGPV) are Cytoplasmic-facing. The residue at position 6 (S6) is a Phosphoserine. Residues 26–44 (EPLVFLANFALVLQGPLTT) form a helical membrane-spanning segment. Residues 45 to 82 (QYIWHRISTELGYNGTRHRENCGNQSADPVLKEVETLT) lie on the Extracellular side of the membrane. 2 N-linked (GlcNAc...) asparagine glycosylation sites follow: N58 and N68. An intrachain disulfide couples C66 to C298. A helical transmembrane segment spans residues 83–108 (SHWTLYMNVGGFLVGLFWSTLLGAWS). Topologically, residues 109–112 (DRVG) are cytoplasmic. Residues 113-135 (RRPLLVLASLGLLLQAVVSIFVV) form a helical membrane-spanning segment. At 136–140 (QLQLH) the chain is on the extracellular side. A helical membrane pass occupies residues 141 to 154 (IGFFVLGRALCALL). Over 155 to 177 (GDFNGLLAASFASVADVSSNHSR) the chain is Cytoplasmic. Residues D156 and E185 each contribute to the H(+) site. Residues 178-203 (TFRMALLEACIGVAGTLASLLGGHWL) form a helical membrane-spanning segment. At 204–208 (RAQGY) the chain is on the extracellular side. A helical transmembrane segment spans residues 209–227 (ANPFWLALAVLIVMTLYAA). Topologically, residues 228-266 (FCFGETVKEPKSTRLFTLRHHRSIVQLYVVPAPEKSRMH) are cytoplasmic. The chain crosses the membrane as a helical span at residues 267-289 (LALYSLAIFVVVTVHFGAQDILT). Residue H281 coordinates H(+). Topologically, residues 290-302 (LYELSTPLCWDSK) are extracellular. The helical transmembrane segment at 303-325 (LIGYGSAAQHLPYLTSLLGLRLL) threads the bilayer. Residues 326 to 331 (QFCLAD) are Cytoplasmic-facing. Residues 332–351 (TWVAEIGLAFNILGMVVFAF) form a helical membrane-spanning segment. At 352-355 (ATIT) the chain is on the extracellular side. The helical transmembrane segment at 356–376 (PLMFTGYGLLFLSLVTTPVIR) threads the bilayer. The Cytoplasmic segment spans residues 377–388 (AKLSKLVSESEQ). A helical membrane pass occupies residues 389 to 414 (GALFSAVACVNSLAMLMASGIFNSLY). The Extracellular portion of the chain corresponds to 415-422 (PATLNFMK). The chain crosses the membrane as a helical span at residues 423–441 (GFPFLLGAGLLFIPAILIG). At 442–459 (VLEKVNPHPEFQQFPQNS) the chain is on the cytoplasmic side.

It belongs to the major facilitator superfamily. SLC46A family. As to quaternary structure, monomer. As to expression, expressed almost exclusively in the small intestine: expressed at high level in the upper half of the small intestine (duodenum and jejunum), expression decreases downwardly in the subsequent quarter and is undetectable in the last quarter (the lowest ileum). Expressed at low level in other tissues, including liver.

Its subcellular location is the cell membrane. It localises to the apical cell membrane. It is found in the basolateral cell membrane. The protein resides in the endosome membrane. The protein localises to the cytoplasm. It carries out the reaction folate(in) + H(+)(in) = folate(out) + H(+)(out). It catalyses the reaction (6S)-5-methyl-5,6,7,8-tetrahydrofolate(in) + H(+)(in) = (6S)-5-methyl-5,6,7,8-tetrahydrofolate(out) + H(+)(out). The enzyme catalyses methotrexate(in) + H(+)(in) = methotrexate(out) + H(+)(out). The catalysed reaction is pemetrexed(in) + H(+)(in) = pemetrexed(out) + H(+)(out). Its activity is regulated as follows. In contrast to human ortholog, not inhibited by myricetin. Functionally, proton-coupled folate symporter that mediates folate absorption using an H(+) gradient as a driving force. Involved in the intestinal absorption of folates at the brush-border membrane of the proximal jejunum, and the transport from blood to cerebrospinal fluid across the choroid plexus. Functions at acidic pH via alternate outward- and inward-open conformation states. Protonation of residues in the outward open state primes the protein for transport. Binding of folate promotes breaking of salt bridge network and subsequent closure of the extracellular gate, leading to the inward-open state and release of protons and folate. Also able to transport antifolate drugs, such as methotrexate and pemetrexed. Involved in FOLR1-mediated endocytosis by serving as a route of export of folates from acidified endosomes. Also acts as a lower-affinity, pH-independent heme carrier protein and constitutes the main importer of heme in the intestine. Imports heme in the retina and retinal pigment epithelium, in neurons of the hippocampus, in hepatocytes and in the renal epithelial cells. Hence, participates in the trafficking of heme and increases intracellular iron content. The sequence is that of Proton-coupled folate transporter from Rattus norvegicus (Rat).